The primary structure comprises 232 residues: Large ribosomal subunit protein uL1 (232 aa).

The protein belongs to the universal ribosomal protein uL1 family. As to quaternary structure, part of the 50S ribosomal subunit.

In terms of biological role, binds directly to 23S rRNA. The L1 stalk is quite mobile in the ribosome, and is involved in E site tRNA release. Functionally, protein L1 is also a translational repressor protein, it controls the translation of the L11 operon by binding to its mRNA. This is Large ribosomal subunit protein uL1 from Bacteroides thetaiotaomicron (strain ATCC 29148 / DSM 2079 / JCM 5827 / CCUG 10774 / NCTC 10582 / VPI-5482 / E50).